The primary structure comprises 480 residues: Proline--tRNA ligase (480 aa).

It belongs to the class-II aminoacyl-tRNA synthetase family. ProS type 3 subfamily. Homodimer.

Its subcellular location is the cytoplasm. The catalysed reaction is tRNA(Pro) + L-proline + ATP = L-prolyl-tRNA(Pro) + AMP + diphosphate. Catalyzes the attachment of proline to tRNA(Pro) in a two-step reaction: proline is first activated by ATP to form Pro-AMP and then transferred to the acceptor end of tRNA(Pro). The chain is Proline--tRNA ligase from Chloroflexus aurantiacus (strain ATCC 29364 / DSM 637 / Y-400-fl).